A 414-amino-acid chain; its full sequence is Transcription factor FAMA (414 aa).

2 disordered regions span residues 1 to 61 (MDKD…TPFD) and 142 to 197 (KEDQ…SQRM). 2 stretches are compositionally biased toward low complexity: residues 12 to 24 (GESSGGNDDNSSG) and 35 to 49 (QQQQKQSMPQQQQHQ). The segment covering 166–175 (RENKNVTKKE) has biased composition (basic and acidic residues). A compositionally biased stretch (basic residues) spans 176-185 (VKSKRKRART). The span at 187–197 (KTSEEVESQRM) shows a compositional bias: basic and acidic residues. The 52-residue stretch at 194–245 (SQRMTHIAVERNRRKQMNEHLRVLRSLMPGSYVQRGDQASIIGGAIEFVREL) folds into the bHLH domain. The LxCxE motif motif lies at 249–253 (LQCLE).

Interacts with FAMA through its LxCxE motif. Self-interacts. Also interacts with bHLH071 and bHLH093. Interacts with RBR1. In terms of tissue distribution, resctricted to stomatal cell lineages (at protein level). Expressed in roots, leaves, stems, and flowers.

Its subcellular location is the nucleus. Its function is as follows. Transcription activator. Together with MYB88 and MYB124, ensures that stomata contain just two guard cells (GCs) by enforcing a single symmetric precursor cell division before stomatal maturity. Together with SPCH and MUTE, regulates the stomata formation. Required to promote differentiation and morphogenesis of stomatal guard cells and to halt proliferative divisions in their immediate precursors. Mediates the formation of stomata. Prevents histone H3K27me3 marks and derepresses stem cell gene expression. This Arabidopsis thaliana (Mouse-ear cress) protein is Transcription factor FAMA (FAMA).